The following is a 505-amino-acid chain: Maturase K (505 aa).

It belongs to the intron maturase 2 family. MatK subfamily.

It localises to the plastid. The protein localises to the chloroplast. Its function is as follows. Usually encoded in the trnK tRNA gene intron. Probably assists in splicing its own and other chloroplast group II introns. The chain is Maturase K from Chiococca alba (West Indian milkberry).